A 380-amino-acid polypeptide reads, in one-letter code: Tryptophan 2,3-dioxygenase (380 aa).

Residues 57-61 (FIITH) and arginine 128 contribute to the substrate site. Histidine 313 contributes to the heme binding site. Threonine 328 is a substrate binding site.

This sequence belongs to the tryptophan 2,3-dioxygenase family. As to quaternary structure, homotetramer. Dimer of dimers. Heme is required as a cofactor.

The enzyme catalyses L-tryptophan + O2 = N-formyl-L-kynurenine. It participates in amino-acid degradation; L-tryptophan degradation via kynurenine pathway; L-kynurenine from L-tryptophan: step 1/2. The protein operates within pigment biosynthesis; ommochrome biosynthesis. In terms of biological role, heme-dependent dioxygenase that catalyzes the oxidative cleavage of the L-tryptophan (L-Trp) pyrrole ring and converts L-tryptophan to N-formyl-L-kynurenine. Catalyzes the oxidative cleavage of the indole moiety. The chain is Tryptophan 2,3-dioxygenase from Drosophila willistoni (Fruit fly).